Consider the following 136-residue polypeptide: Large ribosomal subunit protein bL19 (136 aa).

It belongs to the bacterial ribosomal protein bL19 family.

Functionally, this protein is located at the 30S-50S ribosomal subunit interface and may play a role in the structure and function of the aminoacyl-tRNA binding site. This is Large ribosomal subunit protein bL19 from Xylella fastidiosa (strain 9a5c).